Reading from the N-terminus, the 737-residue chain is Catalase-peroxidase (737 aa).

The tract at residues 1–33 (MPEATEHPPIGEAQTEPAQSGCPMVIKPPVEGG) is disordered. Residues 107–235 (WHAAGTYRVQ…LGASHMGLIY (129 aa)) constitute a cross-link (tryptophyl-tyrosyl-methioninium (Trp-Tyr) (with M-261)). Catalysis depends on His-108, which acts as the Proton acceptor. Positions 235-261 (YVNPEGPEGNPDPIAAAIDIRETFGRM) form a cross-link, tryptophyl-tyrosyl-methioninium (Tyr-Met) (with W-107). His-276 provides a ligand contact to heme.

Belongs to the peroxidase family. Peroxidase/catalase subfamily. As to quaternary structure, homodimer or homotetramer. Requires heme b as cofactor. In terms of processing, formation of the three residue Trp-Tyr-Met cross-link is important for the catalase, but not the peroxidase activity of the enzyme.

It catalyses the reaction H2O2 + AH2 = A + 2 H2O. It carries out the reaction 2 H2O2 = O2 + 2 H2O. Its function is as follows. Bifunctional enzyme with both catalase and broad-spectrum peroxidase activity. May play a role in polycyclic aromatic hydrocarbon (PAH) metabolism. The protein is Catalase-peroxidase of Mycolicibacterium vanbaalenii (Mycobacterium vanbaalenii).